Reading from the N-terminus, the 205-residue chain is High frequency lysogenization protein HflD homolog (205 aa).

The protein belongs to the HflD family.

The protein resides in the cytoplasm. It localises to the cell inner membrane. This Shewanella sp. (strain W3-18-1) protein is High frequency lysogenization protein HflD homolog.